The chain runs to 215 residues: MNINTILFDLDGTLINTNDLIIESFLHTLNHYYPNQYTREDVLAFIGPPLRDTFEAIDPERVDEMIETYRAFNHAHHDALVKEYETVYDTVQTLHEKGFKLGIVTTKIRHTVNMGLKLTKLDSFFKCVITLDDVEHAKPHPEPIEKALACLQAKPEETLMVGDNHHDILAGKHAGTKTAGVAWTIKGREHLATYEPDFMLEKMSDLLSILGVTSR.

The Nucleophile role is filled by Asp-9.

Belongs to the HAD-like hydrolase superfamily. PpaX family. Mg(2+) serves as cofactor.

The enzyme catalyses diphosphate + H2O = 2 phosphate + H(+). Its function is as follows. Hydrolyzes pyrophosphate formed during P-Ser-HPr dephosphorylation by HPrK/P. Might play a role in controlling the intracellular pyrophosphate pool. The protein is Pyrophosphatase PpaX of Anoxybacillus flavithermus (strain DSM 21510 / WK1).